The chain runs to 306 residues: 33 kDa chaperonin (306 aa).

Cystine bridges form between Cys-242–Cys-244 and Cys-275–Cys-278.

It belongs to the HSP33 family. In terms of processing, under oxidizing conditions two disulfide bonds are formed involving the reactive cysteines. Under reducing conditions zinc is bound to the reactive cysteines and the protein is inactive.

It is found in the cytoplasm. Redox regulated molecular chaperone. Protects both thermally unfolding and oxidatively damaged proteins from irreversible aggregation. Plays an important role in the bacterial defense system toward oxidative stress. The sequence is that of 33 kDa chaperonin from Gloeobacter violaceus (strain ATCC 29082 / PCC 7421).